The primary structure comprises 543 residues: MTATPARRTSLASPATKPVAGGLALAFLATLAGGALLALALEAGGGGFDAAANFDTYLWRVARFTIWQAVASSLLSVLFAIPIARALYAEARFPGRGLILRLFAQPLALPALVAVLGVTSIYGRNGLIAHISDMLGHPMQPDIYGIAGILIAHIFFNMPLAVRLLLAAYESIPDDHWKLAAQLGMGSRARFRLIDWPVIRRSLPGMIGLVFMLCVTSFTTVLTLGGGPRATTLEVAIYQSLHFDFDPARAVALTFTQLALTLLILLILRLTGRPSEEGFTQTATPRRYGSPRKTERLFNIIVIALGFLYVALPIAGVVVSGLTADLVRLLSERIVWHAIATSLALGFSAALLAVFLSLALVAAREATRNARIANIFDTGASLILVMPPIVIGAGWFILLRHFTDPFVMAPLMVVTVNAAMAMPFAVRLLRPAWDTAASRHNKLCSQLGIKGFNRLRLIDWPSIRRPCGMAFAFAMALSLGDLGTIALFGSDALVTLPYLLLQRMGSYRTFDAAGLALILGVLCLALMMIADRAAASRKEAFLQ.

The next 12 membrane-spanning stretches (helical) occupy residues 19 to 39, 64 to 84, 102 to 122, 142 to 162, 205 to 225, 250 to 270, 300 to 320, 343 to 363, 379 to 399, 406 to 426, 468 to 488, and 510 to 530; these read VAGG…LLAL, FTIW…IPIA, LFAQ…TSIY, DIYG…PLAV, GMIG…LTLG, AVAL…ILRL, IIVI…VVVS, LALG…LVAA, GASL…FILL, FVMA…PFAV, GMAF…IALF, and FDAA…MMIA. In terms of domain architecture, ABC transmembrane type-1 1 spans 62–266; that stretch reads ARFTIWQAVA…QLALTLLILL (205 aa). The region spanning 339–530 is the ABC transmembrane type-1 2 domain; the sequence is IATSLALGFS…VLCLALMMIA (192 aa).

It belongs to the binding-protein-dependent transport system permease family. CysTW subfamily. The complex is composed of two ATP-binding proteins (ThiQ), two transmembrane proteins (ThiP) and a solute-binding protein (ThiB).

It is found in the cell inner membrane. In terms of biological role, part of the ABC transporter complex ThiBPQ involved in thiamine import. Probably responsible for the translocation of the substrate across the membrane. This is Thiamine transport system permease protein ThiP (thiP) from Brucella melitensis biotype 1 (strain ATCC 23456 / CCUG 17765 / NCTC 10094 / 16M).